A 311-amino-acid polypeptide reads, in one-letter code: CD-NTase-associated protein 6 (311 aa).

ATP-binding positions include 84–89 (GSGKTE) and 215–216 (RR).

It belongs to the AAA ATPase family. In terms of assembly, homohexamer. Forms a 1:1:6 CdnC:Cap7:Cap6 complex.

Functionally, regulates complex assembly in a CBASS antivirus system. CBASS (cyclic oligonucleotide-based antiphage signaling system) provides immunity against bacteriophage. The CD-NTase protein synthesizes cyclic nucleotides in response to infection; these serve as specific second messenger signals. The signals activate a diverse range of effectors, leading to bacterial cell death and thus abortive phage infection. A type III-C(AAA) CBASS system. Binds and disassembles an active CdnC:Cap7 (Cap7 is also called HORMA) complex, inhibiting the complex's ability to synthesize cyclic nucleotide second messengers. An AAA+-ATPase remodeler, in the absence of foreign threat Cap6 (also called Trip13) probably maintains the Cap7 protein in its open, inactive state. Once activated (presumably by a bacteriophage protein) Cap7 binds to and activates its cognate CD-NTase (CdnC in this bacteria) to synthesize cAAA, a cyclic nucleotide second messenger. cAAA activates the NucC endonuclease which degrades all DNA in the infected cell, causing cell death and abortive phage infection. Its function is as follows. Protects E.coli strain JP313 against bacteriophage lambda cI- infection. When the cdnC-cap7-cap6-nucC operon is transformed into a susceptible E.coli strain it confers bacteriophage lambda cI- immunity. Mutations in the sensor (Cap7 also called HORMA) or effector proteins (CdnC, NucC) but not the disassembly protein (Cap6 also called Trip13) no longer confer immunity. The presence of the intact operon leads to culture collapse and cell death, which occurs before the phage has finished its replication cycle, thus protecting non-infected bacteria by aborting the phage infection and preventing its propagation. In Escherichia coli (strain MS 115-1), this protein is CD-NTase-associated protein 6.